The chain runs to 439 residues: Ribosomal protein uS12 methylthiotransferase RimO (439 aa).

The MTTase N-terminal domain occupies 7 to 119; it reads KQLCLISLGC…IDIMIAKKQN (113 aa). [4Fe-4S] cluster is bound by residues C16, C50, C82, C151, C155, and C158. The region spanning 137–365 is the Radical SAM core domain; it reads TGSSVHAYVK…NKIALKHQNN (229 aa).

The protein belongs to the methylthiotransferase family. RimO subfamily. It depends on [4Fe-4S] cluster as a cofactor.

The protein resides in the cytoplasm. The catalysed reaction is L-aspartate(89)-[ribosomal protein uS12]-hydrogen + (sulfur carrier)-SH + AH2 + 2 S-adenosyl-L-methionine = 3-methylsulfanyl-L-aspartate(89)-[ribosomal protein uS12]-hydrogen + (sulfur carrier)-H + 5'-deoxyadenosine + L-methionine + A + S-adenosyl-L-homocysteine + 2 H(+). In terms of biological role, catalyzes the methylthiolation of an aspartic acid residue of ribosomal protein uS12. This Helicobacter pylori (strain Shi470) protein is Ribosomal protein uS12 methylthiotransferase RimO.